Consider the following 291-residue polypeptide: MAITASMVKELRDTTGAGMMDAKKALTETDGDMDAAVDWLRTKGLAKAAKKSGRTAAEGLVAVAVSGSTGVAVEVNSETDFVGKNAEFQEMVAGIAQVALGADDTEALLAADMGGKSVADTVTAKVATIGENMGVRRMAKLEGDIVVSYVHNAAADGMGKIGVLIATKGGDAGFAKQVAMHVAAVNPASLDEASVDPEMVEKERQVQIDIARESGKPEQVIEKMIVGRMKKYLSEITLVNQAFVVNPDLTVGEAAKEASAEITGFVRLEVGEGIEKKVENFAEEVAKTAKG.

The tract at residues 79 to 82 (TDFV) is involved in Mg(2+) ion dislocation from EF-Tu.

It belongs to the EF-Ts family.

Its subcellular location is the cytoplasm. Associates with the EF-Tu.GDP complex and induces the exchange of GDP to GTP. It remains bound to the aminoacyl-tRNA.EF-Tu.GTP complex up to the GTP hydrolysis stage on the ribosome. The protein is Elongation factor Ts of Jannaschia sp. (strain CCS1).